We begin with the raw amino-acid sequence, 1026 residues long: uncharacterized protein (1026 aa).

4 WD repeats span residues 14–53 (LLDE…HFTL), 62–104 (HSVS…RRAT), 148–187 (GHED…LTFK), and 937–977 (NAEC…VKFL).

The protein localises to the cytoplasm. It is found in the nucleus. This is an uncharacterized protein from Schizosaccharomyces pombe (strain 972 / ATCC 24843) (Fission yeast).